A 260-amino-acid chain; its full sequence is MDNFELRLNSGKLIDNDSKVHEIGVIAMGSYLENHGSALPIDTDIKIASYVALNVALTTGAKFLGTVCTATEYDYIKHGIHNSLEDILEELEEIIIKYSKIGVNKFLIINCHGGNSDVSKKIEQLQEKIRNNFKEYGTTEKELEYIKKIKYNFKEYGNTEKINIKIKSFGYIHAYSEELSIGKCIGIYDETKFNKHTPENYGEIGMVGLPEARLNNKYIDKEAKMVESIPAVVNEQYGEELIKKMVNESIEYIREFLMLK.

Fe cation contacts are provided by Glu33, His35, Asp44, and His112.

It belongs to the creatininase superfamily. FAPy deformylase family. As to quaternary structure, homodimer. Fe(2+) is required as a cofactor. Zn(2+) serves as cofactor.

The enzyme catalyses 2-amino-5-formylamino-6-(5-phospho-D-ribosylamino)pyrimidin-4(3H)-one + H2O = 2,5-diamino-6-(1-D-ribosylamino)pyrimidin-4(3H)-one 5'-phosphate + formate + H(+). The protein operates within cofactor biosynthesis; coenzyme F420 biosynthesis. Its pathway is cofactor biosynthesis; riboflavin biosynthesis. In terms of biological role, catalyzes the hydrolysis of the formamide of 2-amino-5-formylamino-6-ribosylamino-4(3H)-pyrimidinone 5'-monophosphate (FAPy) to form 2,5-diamino-6-ribosylamino-4(3H)-pyrimidinone 5'-phosphate (APy). The sequence is that of 2-amino-5-formylamino-6-ribosylaminopyrimidin-4(3H)-one 5'-monophosphate deformylase from Methanococcus voltae (strain ATCC BAA-1334 / A3).